The sequence spans 469 residues: Glutamate--tRNA ligase 2 (469 aa).

A 'HIGH' region motif is present at residues 8-18 (PSPTGFLHVGG). Positions 250–254 (KLSKR) match the 'KMSKS' region motif. Lys253 lines the ATP pocket.

This sequence belongs to the class-I aminoacyl-tRNA synthetase family. Glutamate--tRNA ligase type 1 subfamily. In terms of assembly, monomer.

The protein resides in the cytoplasm. The enzyme catalyses tRNA(Glu) + L-glutamate + ATP = L-glutamyl-tRNA(Glu) + AMP + diphosphate. Functionally, catalyzes the attachment of glutamate to tRNA(Glu) in a two-step reaction: glutamate is first activated by ATP to form Glu-AMP and then transferred to the acceptor end of tRNA(Glu). In Thermotoga petrophila (strain ATCC BAA-488 / DSM 13995 / JCM 10881 / RKU-1), this protein is Glutamate--tRNA ligase 2.